The primary structure comprises 583 residues: PTS system lactose-specific EIICB component (583 aa).

A PTS EIIC type-3 domain is found at 8-409 (IEKGKPFFEK…VVDVMIYYPF (402 aa)). 9 helical membrane passes run 30–50 (GFIAAIPIILFSSIFILITYV), 64–84 (GILMKPYNYTMGIVGLIVAGT), 103–123 (INFISTMMAAMSGFLFLAADP), 137–157 (KGLLTAFISAFITVIVYNFFI), 176–196 (VFKDIFPLSAVIIIIYALDLL), 222–242 (GWIGVTLIFGAFAFFWFVGIH), 283–303 (FVATMGGTGATLVVPFMFMWL), 339–359 (VFFIPFIFAPIVNVWIFKFFV), and 381–401 (IVMGTGFAFWSFVLAIVLIVV). The span at 453-462 (ANETTTTESA) shows a compositional bias: low complexity. The tract at residues 453 to 475 (ANETTTTESAPSDEEVSAKNSSN) is disordered. Residues 480–583 (QTNVLVLCAG…LDFVQQQFEK (104 aa)) form the PTS EIIB type-3 domain. The Phosphocysteine intermediate; for EIIB activity role is filled by cysteine 487. Position 487 is a phosphocysteine; by EIIA (cysteine 487).

The protein resides in the cell membrane. It carries out the reaction lactose(out) + N(pros)-phospho-L-histidyl-[protein] = lactose 6-phosphate(in) + L-histidyl-[protein]. The phosphoenolpyruvate-dependent sugar phosphotransferase system (sugar PTS), a major carbohydrate active transport system, catalyzes the phosphorylation of incoming sugar substrates concomitantly with their translocation across the cell membrane. The enzyme II LacEF PTS system is involved in lactose transport. This Staphylococcus haemolyticus (strain JCSC1435) protein is PTS system lactose-specific EIICB component.